The primary structure comprises 223 residues: Translation initiation factor 6 (223 aa).

This sequence belongs to the eIF-6 family. In terms of assembly, associates with the 50S ribosomal subunit, specifically with protein L14. Binds to 23S rRNA, possibly between where the 30S and 50S subunits associate to initiate translation. Post-translationally, modified in an unknown fashion (not phosphorylation) following release from 50S ribosomal subunits.

Binds to the 50S ribosomal subunit and prevents its association with the 30S ribosomal subunit to form the 70S initiation complex. Inhibits translation of both leadered and leaderless mRNAs, maybe by binding to the 50S ribosome subunit, preventing it from binding to the 30S subunit. In Saccharolobus solfataricus (strain ATCC 35092 / DSM 1617 / JCM 11322 / P2) (Sulfolobus solfataricus), this protein is Translation initiation factor 6.